A 972-amino-acid polypeptide reads, in one-letter code: Peptidyl-glycine alpha-amidating monooxygenase (972 aa).

A signal peptide spans Met1 to Gly20. A peptidylglycine alpha-hydroxylating monooxygenase region spans residues Met1 to Gly494. The propeptide occupies Phe21–Arg30. Over Phe31–Leu873 the chain is Intragranular. Disulfide bonds link Cys42-Cys181, Cys76-Cys121, Cys109-Cys126, Cys222-Cys329, and Cys288-Cys310. 2 residues coordinate Cu(2+): His102 and His103. His167, His237, His239, and Met309 together coordinate Cu(2+). The peptidyl-alpha-hydroxyglycine alpha-amidating lyase stretch occupies residues Asp495–Val817. NHL repeat units follow at residues Val498–Asp541, Ala567–Lys608, Leu617–Ser662, and Gly670–Asp714. Ca(2+) is bound at residue Val517. Residue Arg530 participates in a protein binding. His582 contacts Zn(2+). Leu584 contributes to the Ca(2+) binding site. A disulfide bridge connects residues Cys631 and Cys652. Tyr651 contacts a protein. His687 serves as a coordination point for Zn(2+). Cys699 and Cys710 are joined by a disulfide. Arg703 contacts a protein. An N-linked (GlcNAc...) asparagine glycan is attached at Asn762. One copy of the NHL 5 repeat lies at Gly766 to Thr809. His783 contacts Zn(2+). Residue Asp784 coordinates Ca(2+). Residues Val874–Asp897 form a helical membrane-spanning segment. Residues Ser898–Ser972 lie on the Cytoplasmic side of the membrane. Residues Asn925–Ser942 form an interaction with RASSF9 region. Residues Ser929 and Ser942 each carry the phosphoserine modification. The disordered stretch occupies residues Gly937–Ser972. Thr943 carries the phosphothreonine modification. Residue Ser946 is modified to Phosphoserine; by UHMK1. The segment covering Glu949–Tyr961 has biased composition (acidic residues). At Ser957 the chain carries Phosphoserine. A compositionally biased stretch (pro residues) spans Ala963–Ser972.

This sequence in the C-terminal section; belongs to the peptidyl-alpha-hydroxyglycine alpha-amidating lyase family. The protein in the N-terminal section; belongs to the copper type II ascorbate-dependent monooxygenase family. As to quaternary structure, monomer. Interacts with RASSF9. Zn(2+) is required as a cofactor. The cofactor is Cu(2+).

The protein resides in the cytoplasmic vesicle. Its subcellular location is the secretory vesicle membrane. The catalysed reaction is a [peptide]-C-terminal glycine + 2 L-ascorbate + O2 = a [peptide]-C-terminal (2S)-2-hydroxyglycine + 2 monodehydro-L-ascorbate radical + H2O. It carries out the reaction a [peptide]-C-terminal (2S)-2-hydroxyglycine = a [peptide]-C-terminal amide + glyoxylate. The enzyme catalyses N-dodecanoylglycine + 2 L-ascorbate + O2 = N-dodecanoyl-(2S)-hydroxyglycine + 2 monodehydro-L-ascorbate radical + H2O. It catalyses the reaction N-dodecanoyl-(2S)-hydroxyglycine = dodecanamide + glyoxylate. The catalysed reaction is N-(9Z,12Z,15Z)-octadecatrienoylglycine + 2 L-ascorbate + O2 = N-(9Z,12Z,15Z)-octadecatrienoyl-(2S)-hydroxyglycine + 2 monodehydro-L-ascorbate radical + H2O. It carries out the reaction N-(9Z,12Z,15Z)-octadecatrienoyl-(2S)-hydroxyglycine = (9Z,12Z,15Z)-octadecatrienamide + glyoxylate. The enzyme catalyses N-(9Z-octadecenoyl)glycine + 2 L-ascorbate + O2 = N-(9Z-octadecenoyl)-(2S)-hydroxyglycine + 2 monodehydro-L-ascorbate radical + H2O. It catalyses the reaction N-(9Z-octadecenoyl)-(2S)-hydroxyglycine = (9Z)-octadecenamide + glyoxylate. The catalysed reaction is N-tetradecanoylglycine + 2 L-ascorbate + O2 = N-tetradecanoyl-(2S)-hydroxyglycine + 2 monodehydro-L-ascorbate radical + H2O. It carries out the reaction N-tetradecanoyl-(2S)-hydroxyglycine = tetradecamide + glyoxylate. The enzyme catalyses N-decanoylglycine + 2 L-ascorbate + O2 = N-decanoyl-(2S)-hydroxyglycine + 2 monodehydro-L-ascorbate radical + H2O. It catalyses the reaction N-decanoyl-(2S)-hydroxyglycine = decanamide + glyoxylate. The catalysed reaction is N-octanoylglycine + 2 L-ascorbate + O2 = N-octanoyl-(2S)-hydroxyglycine + 2 monodehydro-L-ascorbate radical + H2O. It carries out the reaction N-octanoyl-(2S)-hydroxyglycine = octanamide + glyoxylate. With respect to regulation, PAM activity is inhibited by EDTA, phenylglyoxal and diethyl pyrocarbonate. PAL activity is stimulated by cadmium and inhibited by mercury. In terms of biological role, bifunctional enzyme that catalyzes amidation of the C-terminus of proteins. Alpha-amidation is present at the C-terminus of many endocrine hormones and neuropeptides and is required for their activity. C-terminal amidation also takes place in response to protein fragmentation triggered by oxidative stress, promoting degradation of amidated protein fragments by the proteasome. Alpha-amidation involves two sequential reactions, both of which are catalyzed by separate catalytic domains of the enzyme. The first step, catalyzed by peptidyl alpha-hydroxylating monooxygenase (PHM) domain, is the copper-, ascorbate-, and O2- dependent stereospecific hydroxylation (with S stereochemistry) at the alpha-carbon (C-alpha) of the C-terminal glycine of the peptidylglycine substrate. The second step, catalyzed by the peptidylglycine amidoglycolate lyase (PAL) domain, is the zinc-dependent cleavage of the N-C-alpha bond, producing the alpha-amidated peptide and glyoxylate. Similarly, catalyzes the two-step conversion of an N-fatty acylglycine to a primary fatty acid amide and glyoxylate. The polypeptide is Peptidyl-glycine alpha-amidating monooxygenase (PAM) (Bos taurus (Bovine)).